We begin with the raw amino-acid sequence, 303 residues long: MITAKAVKELRERTGAGMMDCKKALTETNGDMEKAVEVLREKGLAAAAKKAGRVAAEGIVKTYVSEDMKKGSIVEINCETDFVALNEEFVGFAGRVAELVANSNVNTVEELLAEKLDGDKTVQEVLTELIAKIGENMSVRRFERFSVESGLVQSYIHGGGRIGVMAELACEASSPVLAEVAKDVCMQIAAANPLFLSEADVDQESLEKEKEIYRAQALNEGKPEHIVDKMVMGRIKKYCKEVCLLDQAWVKDGDKSISKLLEEKSKEVGSPITITKFVRFERGEGIEKKEENFAEEVAKMGGK.

The tract at residues 80–83 (TDFV) is involved in Mg(2+) ion dislocation from EF-Tu.

It belongs to the EF-Ts family.

Its subcellular location is the cytoplasm. In terms of biological role, associates with the EF-Tu.GDP complex and induces the exchange of GDP to GTP. It remains bound to the aminoacyl-tRNA.EF-Tu.GTP complex up to the GTP hydrolysis stage on the ribosome. This Clostridium perfringens (strain SM101 / Type A) protein is Elongation factor Ts.